Consider the following 289-residue polypeptide: Ribosomal protein L11 methyltransferase (289 aa).

S-adenosyl-L-methionine contacts are provided by Thr142, Gly163, Asp185, and Asn226.

This sequence belongs to the methyltransferase superfamily. PrmA family.

The protein resides in the cytoplasm. The enzyme catalyses L-lysyl-[protein] + 3 S-adenosyl-L-methionine = N(6),N(6),N(6)-trimethyl-L-lysyl-[protein] + 3 S-adenosyl-L-homocysteine + 3 H(+). Methylates ribosomal protein L11. This chain is Ribosomal protein L11 methyltransferase, found in Legionella pneumophila (strain Lens).